The following is a 470-amino-acid chain: Glutathione reductase (470 aa).

Ser-16 and Gly-17 together coordinate FAD. Residue Ser-16 coordinates glutathione. Arg-23 is a glutathione binding site. 4 residues coordinate FAD: Glu-36, Thr-43, Cys-44, and Lys-52. Residues Cys-44 and Cys-49 are joined by a disulfide bond. Tyr-104 is a glutathione binding site. Ala-120 contributes to the FAD binding site. The NADP(+) site is built by Gly-190, Ile-193, Glu-196, Arg-213, and Arg-219. Thr-228 provides a ligand contact to glutathione. Gly-280 is a binding site for NADP(+). Asp-321 is an FAD binding site. Glu-327 contacts NADP(+). Thr-329 lines the FAD pocket. Residue Arg-337 coordinates glutathione. Ala-362 provides a ligand contact to NADP(+). Glutathione is bound at residue Lys-412. His-459 contacts FAD. Residue His-459 is the Proton acceptor of the active site.

It belongs to the class-I pyridine nucleotide-disulfide oxidoreductase family. As to quaternary structure, homodimer. Requires FAD as cofactor.

It is found in the cytoplasm. The protein resides in the mitochondrion. The catalysed reaction is 2 glutathione + NADP(+) = glutathione disulfide + NADPH + H(+). Catalyzes the reduction of glutathione disulfide (GSSG) to reduced glutathione (GSH). Constitutes the major mechanism to maintain a high GSH:GSSG ratio in the cytosol. The polypeptide is Glutathione reductase (GLR1) (Yarrowia lipolytica (strain CLIB 122 / E 150) (Yeast)).